A 379-amino-acid chain; its full sequence is Phospholipase A1 (379 aa).

Positions 1–20 (MKFITAILVIFCVYLLSTAG) are cleaved as a signal peptide. Residues 21-73 (DSKILPLKKLPSKIFGHLKSHVDNTVKKPLKVFGHLKSHVENSVGPLRMNKLT) constitute a propeptide that is removed on maturation. The cysteines at positions 76 and 154 are disulfide-linked. Residue asparagine 126 is glycosylated (N-linked (GlcNAc...) asparagine). Serine 204 (nucleophile) is an active-site residue. Aspartate 232 acts as the Charge relay system in catalysis. 2 disulfide bridges follow: cysteine 243-cysteine 248 and cysteine 285-cysteine 291. Histidine 293 acts as the Charge relay system in catalysis.

Belongs to the AB hydrolase superfamily. Lipase family. Contains five disulfide bonds. Expressed by the venom gland.

It localises to the secreted. It carries out the reaction a 1,2-diacyl-sn-glycero-3-phosphocholine + H2O = a 2-acyl-sn-glycero-3-phosphocholine + a fatty acid + H(+). In terms of biological role, catalyzes the hydrolysis of phosphatidylcholine with phospholipase A1 activity. May act as an allergen and induce hemolytic activity. In Dinoponera quadriceps (South American ant), this protein is Phospholipase A1.